A 266-amino-acid chain; its full sequence is GFP-like fluorescent chromoprotein cFP484 (266 aa).

Residues 104–106 (QYG) constitute a cross-link (2-iminomethyl-5-imidazolinone (Gln-Gly)). Y105 is subject to 2,3-didehydrotyrosine.

This sequence belongs to the GFP family. Contains a chromophore consisting of modified amino acid residues. The chromophore is formed by autocatalytic backbone condensation between Xaa-N and Gly-(N+2), oxidation of Tyr-(N+1) to didehydrotyrosine, and formation of a double bond to the alpha-amino nitrogen of residue Xaa-N. Maturation of the chromophore requires nothing other than molecular oxygen. The precise stereochemistry of the tyrosine has not been determined. In terms of tissue distribution, tentacle and oral disk.

In terms of biological role, pigment protein that is green in color. In Clavularia sp. (Brown star polyp), this protein is GFP-like fluorescent chromoprotein cFP484.